The primary structure comprises 893 residues: POU domain protein 2, isoform B (893 aa).

Positions 586 to 668 (QMKQQQREDP…STPKPTSGLT (83 aa)) are disordered. Over residues 602–617 (PLAKSPLRSPSLSPVP) the composition is skewed to low complexity. Residues 623-646 (QQRTPPNSMTANSLGMSSAVMTPN) are compositionally biased toward polar residues. Over residues 647–665 (TPSMQQQPQLQQSTPKPTS) the composition is skewed to low complexity. A POU-specific domain is found at 681–755 (EETTDLEELE…LLQKWLEDAD (75 aa)). Positions 786–845 (RRKKRTSIETTVRTTLEKAFLMNCKPTSEEISQLSERLNMDKEVIRVWFCNRRQKEKRIN) form a DNA-binding region, homeobox.

Belongs to the POU transcription factor family. Class-2 subfamily. Initial expression in cellular blastoderm stage, then in ectodermal stripes during germband extension. Broad expression in the neuroectoderm followed by limitation to discrete subsets of CNS cells, and expression in specific PNS neurons and support cells.

Its subcellular location is the nucleus. Its function is as follows. DNA-binding regulatory protein implicated in early development. Involved in neuronal cell fate decision. May act as an octamer-dependent activator of transcription. Could also play an early role in specific ectodermal cells, and a subsequent role in the embryonic nervous system. This is POU domain protein 2, isoform B from Drosophila melanogaster (Fruit fly).